The chain runs to 318 residues: Taste receptor type 2 member 7 (318 aa).

The Extracellular portion of the chain corresponds to 1–9; it reads MTDKVQTTL. Residues 10 to 30 form a helical membrane-spanning segment; sequence LFLAIGEFSVGILGNAFIGLV. Residues 31-55 lie on the Cytoplasmic side of the membrane; the sequence is NCMDWVKKRKIASIDLILTSLAISR. Residues 56 to 76 form a helical membrane-spanning segment; sequence ICLLCVILLDCFMLVLYPDVY. Residues 77–94 are Extracellular-facing; sequence ATGKQMRIIDFFWTLTNH. The helical transmembrane segment at 95 to 115 threads the bilayer; sequence LSIWFATCLSIYYFFKIANFF. Residues 116–128 are Cytoplasmic-facing; sequence HPLFLWMKWRIDR. Residues 129–149 traverse the membrane as a helical segment; it reads VISWILLGCMVLSVFINLPAT. Residues 150 to 187 are Extracellular-facing; that stretch reads ENLNADFRRCVKAKRKTNLTWSCRVTKAQHASTKLFLN. The N-linked (GlcNAc...) asparagine glycan is linked to asparagine 167. A helical transmembrane segment spans residues 188–208; it reads LVTLLPFSVCLMSFFLLILSL. Residues 209 to 235 lie on the Cytoplasmic side of the membrane; sequence WRHIRRMQLSATGCRDPSTEAHVRALK. Residues 236–256 traverse the membrane as a helical segment; that stretch reads AVISFLLLFIAYYLSFLIATS. Residues 257–266 are Extracellular-facing; sequence SYFIPETELA. Residues 267 to 287 traverse the membrane as a helical segment; sequence VIFGEFIALIYPSSHSFILIL. The Cytoplasmic portion of the chain corresponds to 288–318; it reads GNSKLRRASLKVLWTVMSILKGRKFQQHKQI.

The protein belongs to the G-protein coupled receptor T2R family.

Its subcellular location is the membrane. Its function is as follows. Gustducin-coupled receptor implicated in the perception of bitter compounds in the oral cavity and the gastrointestinal tract. Signals through PLCB2 and the calcium-regulated cation channel TRPM5. In Macaca mulatta (Rhesus macaque), this protein is Taste receptor type 2 member 7 (TAS2R7).